The primary structure comprises 164 residues: UPF0201 protein MA_4659 (164 aa).

This sequence belongs to the UPF0201 family.

This Methanosarcina acetivorans (strain ATCC 35395 / DSM 2834 / JCM 12185 / C2A) protein is UPF0201 protein MA_4659.